The sequence spans 647 residues: Chaperone protein DnaK (647 aa).

Thr198 is modified (phosphothreonine; by autocatalysis). The disordered stretch occupies residues 606–634 (GASAEGMDPNQFQQGADNAGESNQADDDV). Over residues 615 to 628 (NQFQQGADNAGESN) the composition is skewed to polar residues.

The protein belongs to the heat shock protein 70 family.

Its function is as follows. Acts as a chaperone. The polypeptide is Chaperone protein DnaK (Psychrobacter cryohalolentis (strain ATCC BAA-1226 / DSM 17306 / VKM B-2378 / K5)).